The primary structure comprises 365 residues: 3-isopropylmalate dehydrogenase (365 aa).

Gly-78 to Glu-89 contacts NAD(+). Residues Arg-96, Arg-106, Arg-135, and Asp-224 each contribute to the substrate site. Mg(2+) contacts are provided by Asp-224, Asp-249, and Asp-253. Gly-289 to Asn-301 contributes to the NAD(+) binding site.

The protein belongs to the isocitrate and isopropylmalate dehydrogenases family. Homodimer. Mg(2+) is required as a cofactor. Requires Mn(2+) as cofactor.

It localises to the cytoplasm. The catalysed reaction is (2R,3S)-3-isopropylmalate + NAD(+) = 4-methyl-2-oxopentanoate + CO2 + NADH. Its pathway is amino-acid biosynthesis; L-leucine biosynthesis; L-leucine from 3-methyl-2-oxobutanoate: step 3/4. Functionally, catalyzes the oxidation of 3-carboxy-2-hydroxy-4-methylpentanoate (3-isopropylmalate) to 3-carboxy-4-methyl-2-oxopentanoate. The product decarboxylates to 4-methyl-2 oxopentanoate. This chain is 3-isopropylmalate dehydrogenase (LEUC), found in Zymoseptoria tritici (Speckled leaf blotch fungus).